The sequence spans 545 residues: Tripartite motif-containing protein 55 (545 aa).

The RING-type zinc-finger motif lies at 26-82 (CPICLEMFTKPVVILPCQHNLCRKCASDIFQASNPYLPTRGGTTVASGGRFRCPSCR). The B box-type zinc finger occupies 119 to 161 (LDQPMCEEHEEERINIYCLNCEVPTCSLCKVFGAHKDCQVAPL). Zn(2+)-binding residues include C124, H127, C147, and H153. The stretch at 219-258 (YSILEERKTEMTQAITRTQEEKLEHVRTLIRKYSDHLENV) forms a coiled coil. The region spanning 269–327 (MDEPEMAVFLQNAKTLLQKITEASKAFQMEKIEQGYEIMNNFTVNLNREEKIIREIDFS) is the COS domain. 2 disordered regions span residues 324 to 378 (IDFS…SELA) and 406 to 528 (LVTQ…GADS). Positions 328-355 (REEEDEDDEGEVDEEGEGEDAVEVEEAE) are enriched in acidic residues. Low complexity-rich tracts occupy residues 417 to 426 (SQQTTQSETS) and 469 to 493 (SAAEDSSVQSAEVAEAAANEQAAVS). The span at 495 to 506 (KESSSTAATSQI) shows a compositional bias: polar residues. Residues 510 to 520 (ASSPQGQAAAL) show a composition bias toward low complexity.

Homooligomer and heterooligomer. Interacts with titin/TTN. Interacts with myosins. Interacts with SQSTM1 and NBR1. Probably interacts with TRIM63 and TRIM54. Targeted for degradation through the proteasomal and lysosomal pathways in the presence of SUMO3.

Its subcellular location is the nucleus. The protein localises to the cytoplasm. It catalyses the reaction S-ubiquitinyl-[E2 ubiquitin-conjugating enzyme]-L-cysteine + [acceptor protein]-L-lysine = [E2 ubiquitin-conjugating enzyme]-L-cysteine + N(6)-ubiquitinyl-[acceptor protein]-L-lysine.. In terms of biological role, E3 ubiquitin ligase that plays an important role in regulating cardiac development and contractility, muscle growth, metabolism, and fiber-type differentiation. Acts as a critical factor that regulates cardiomyocyte size during development in concert with TRIM63 by regulating E2F1-mediated gene expression. Plays a role in apoptosis induction in cardiomyocytes by promoting ubiquitination of the DUSP1 phosphatase. Promotes non-canonical NF-kappa-B signaling and B-cell-mediated immune responses by mediating NFKB2 'Lys-48'-linked ubiquitination and processing. In turn, NFKB2 is further processed by valosin-containing protein/VCP, an ATPase that mediates ubiquitin-dependent protein degradation by the proteasome. May play a role in preventing macrophages from producing inflammatory factors and migrating by downregulating the level of nuclear NF-kappa-B subunit RELA. Also modifies PPARG via polyubiquitination and accelerates PPARG proteasomal degradation to inhibit its activity. This is Tripartite motif-containing protein 55 (Trim55) from Rattus norvegicus (Rat).